The sequence spans 1028 residues: Pro-apoptotic serine protease nma111 (1028 aa).

Residues 1–49 (MDLNGDAGAKRKRSSITTPAERPVKHLRPESSALTPGDSTPANGTVYDV) form a disordered region. The segment covering 32 to 43 (SALTPGDSTPAN) has biased composition (polar residues). Residues 82-266 (VVSIHFCQTC…AATDYFLPLD (185 aa)) are serine protease. Residues His120, Asp151, and Ser233 each act as charge relay system in the active site. 2 PDZ domains span residues 289–374 (QWIL…LLVQ) and 876–957 (VFCG…VTFD). The disordered stretch occupies residues 983–1028 (QPSGWRTVSHDKDKYKDGIAPDAANLNPDAMDEGFDGVSDIEPDLE). The span at 990-1001 (VSHDKDKYKDGI) shows a compositional bias: basic and acidic residues. Residues 1012 to 1028 (AMDEGFDGVSDIEPDLE) show a composition bias toward acidic residues.

It belongs to the peptidase S1C family.

Its subcellular location is the nucleus. In terms of biological role, nuclear serine protease which mediates apoptosis. This Aspergillus niger (strain ATCC MYA-4892 / CBS 513.88 / FGSC A1513) protein is Pro-apoptotic serine protease nma111 (nma111).